We begin with the raw amino-acid sequence, 603 residues long: Iron-sulfur clusters transporter ATM1, mitochondrial (603 aa).

Residues valine 20–phenylalanine 41 traverse the membrane as a helical segment. An ABC transmembrane type-1 domain is found at valine 20 to glutamine 310. The Mitochondrial intermembrane portion of the chain corresponds to arginine 42–glycine 64. Residues threonine 65–phenylalanine 88 traverse the membrane as a helical segment. The Mitochondrial matrix portion of the chain corresponds to serine 89–leucine 137. Residues leucine 138 to tyrosine 161 form a helical membrane-spanning segment. Residue glutamine 162 is a topological domain, mitochondrial intermembrane. The helical transmembrane segment at phenylalanine 163 to isoleucine 183 threads the bilayer. The Mitochondrial matrix segment spans residues tryptophan 184 to alanine 249. Glutathione is bound by residues arginine 189–arginine 193 and asparagine 252–glutamine 255. A helical transmembrane segment spans residues phenylalanine 250–tryptophan 268. The Mitochondrial intermembrane portion of the chain corresponds to leucine 269–aspartate 283. Residues leucine 284–tyrosine 305 traverse the membrane as a helical segment. Glycine 302 is a glutathione binding site. Residues arginine 306 to lysine 603 are Mitochondrial matrix-facing. Positions isoleucine 345–alanine 581 constitute an ABC transporter domain. Residues tyrosine 354 and glycine 378 to arginine 389 contribute to the ATP site.

It belongs to the ABC transporter superfamily. ABCB family. Heavy Metal importer (TC 3.A.1.210) subfamily. As to quaternary structure, homodimer.

The protein localises to the mitochondrion inner membrane. In terms of biological role, performs an essential function in the generation of cytoplasmic iron-sulfur proteins by mediating the ATP-dependent export of Fe/S cluster precursors synthesized by NFS1 and other mitochondrial proteins. Hydrolyzes ATP. Binds glutathione and may function by transporting a glutathione-conjugated iron-sulfur compound. This chain is Iron-sulfur clusters transporter ATM1, mitochondrial, found in Chaetomium globosum (strain ATCC 6205 / CBS 148.51 / DSM 1962 / NBRC 6347 / NRRL 1970) (Soil fungus).